Reading from the N-terminus, the 86-residue chain is Large ribosomal subunit protein bL31B (86 aa).

Belongs to the bacterial ribosomal protein bL31 family. Type B subfamily. As to quaternary structure, part of the 50S ribosomal subunit.

The protein is Large ribosomal subunit protein bL31B of Streptococcus uberis (strain ATCC BAA-854 / 0140J).